The sequence spans 240 residues: Ribonuclease PH (240 aa).

Residues Arg87 and 125–127 (GTR) each bind phosphate.

Belongs to the RNase PH family. Homohexameric ring arranged as a trimer of dimers.

The enzyme catalyses tRNA(n+1) + phosphate = tRNA(n) + a ribonucleoside 5'-diphosphate. Functionally, phosphorolytic 3'-5' exoribonuclease that plays an important role in tRNA 3'-end maturation. Removes nucleotide residues following the 3'-CCA terminus of tRNAs; can also add nucleotides to the ends of RNA molecules by using nucleoside diphosphates as substrates, but this may not be physiologically important. Probably plays a role in initiation of 16S rRNA degradation (leading to ribosome degradation) during starvation. This Pseudomonas putida (strain ATCC 47054 / DSM 6125 / CFBP 8728 / NCIMB 11950 / KT2440) protein is Ribonuclease PH.